Reading from the N-terminus, the 20-residue chain is VKRCCDEEECSSACWPCCWG.

Residues 1 to 3 (VKR) constitute a propeptide that is removed on maturation. 3 cysteine pairs are disulfide-bonded: C4/C18, C5/C14, and C10/C17. A 4-hydroxyproline modification is found at P16. At W19 the chain carries Tryptophan amide.

Belongs to the conotoxin M superfamily. In terms of tissue distribution, expressed by the venom duct.

The protein resides in the secreted. This is Conotoxin PnMLKM-D0211 from Conus pennaceus (Feathered cone).